Consider the following 1351-residue polypeptide: Bromodomain-containing protein 4A (1351 aa).

7 disordered regions span residues 1 to 23, 35 to 58, 168 to 244, 285 to 368, 478 to 638, 700 to 799, and 821 to 1334; these read MSSE…GIEG, PQPQ…QPKR, ETEL…RPPA, AAQP…DTKT, EPEE…PMSY, CLRK…LDSS, and PDLP…PSID. The 107-residue stretch at 58–164 folds into the Bromo 1 domain; sequence RQTNQLQYLL…KLFLQKISEM (107 aa). Residues 208–219 are compositionally biased toward low complexity; sequence VKPPVTPVSKPS. Positions 220-235 are enriched in pro residues; it reads TPTPPTVTRAPTPPQT. The span at 327 to 343 shows a compositional bias: basic and acidic residues; it reads PRKENGRQIRPTKKTEV. Positions 349 to 359 are enriched in pro residues; sequence PAPPVLHPQPA. Residues 366 to 475 form the Bromo 2 domain; that stretch reads TKTSEQLRYC…DVFEMRFAKM (110 aa). Pro residues predominate over residues 482–504; it reads APAPVPSLAPGPPAPSIKGPPPT. Residues 504–522 are NPS region; that stretch reads TSSDSSSDSTSDSESSSDS. A compositionally biased stretch (low complexity) spans 505 to 517; that stretch reads SSDSSSDSTSDSE. Residues 543–598 are BID region; the sequence is QLAALSQPQPNKPKKKEREKRKEKHKRKEEVEEPRKGRIREPPAKKPKKSVQGSGG. Basic residues predominate over residues 554-569; sequence KPKKKEREKRKEKHKR. Positions 570–586 are enriched in basic and acidic residues; that stretch reads KEEVEEPRKGRIREPPA. A compositionally biased stretch (pro residues) spans 607–621; that stretch reads PPPAPRPARPAPPSA. The region spanning 624 to 708 is the NET domain; sequence ESSEEETQRC…SCLRKKRKSQ (85 aa). A compositionally biased stretch (basic and acidic residues) spans 629–638; that stretch reads ETQRCRPMSY. Over residues 725-738 the composition is skewed to low complexity; it reads SSSESESSSESSTS. Over residues 751-767 the composition is skewed to basic residues; the sequence is QKKKGHSGRESRKHHHP. Positions 788–799 are enriched in low complexity; the sequence is PSYPLPSSLDSS. Positions 872–890 are enriched in pro residues; that stretch reads PAMPPSASPPPPAPQPPQQ. Residues 892–902 show a composition bias toward basic residues; it reads HVHHHHHHHAQ. Polar residues predominate over residues 927 to 953; the sequence is LQKSQQPPTQSPIHSLLTSVKVQSQTP. Over residues 968–983 the composition is skewed to pro residues; it reads VYPPPPSTATTAPPPA. 2 stretches are compositionally biased toward low complexity: residues 994–1003 and 1011–1028; these read PVVPQQLPAG and QQQQ…SHQQ. The segment at 1051–1350 is C-terminal (CTD) region; the sequence is RQQKQETYPG…LMEIFEQNLF (300 aa). The segment covering 1075–1089 has biased composition (pro residues); the sequence is PPVPPYPGLTHPPSP. Composition is skewed to basic and acidic residues over residues 1150 to 1161 and 1176 to 1197; these read PRPDLKKMDGGR and PEKE…DIKI. The segment covering 1214-1224 has biased composition (polar residues); that stretch reads PTSAGKSTSDS. Residues 1226 to 1284 are compositionally biased toward basic and acidic residues; that stretch reads ELFRRQAREKEERERALKLQAEQAERVRREQDRMSRTREDDEVQDQARKAHEEARRRQE. Positions 1301-1310 are enriched in low complexity; that stretch reads SPAQSSQPMM. Basic and acidic residues predominate over residues 1311–1323; that stretch reads DQREMARKREQER.

This sequence belongs to the BET family.

It is found in the nucleus. The protein localises to the chromosome. Chromatin reader protein that recognizes and binds acetylated histones and plays a key role in transmission of epigenetic memory across cell divisions and transcription regulation. Remains associated with acetylated chromatin throughout the entire cell cycle and provides epigenetic memory for postmitotic G1 gene transcription by preserving acetylated chromatin status and maintaining high-order chromatin structure. During interphase, plays a key role in regulating the transcription of signal-inducible genes by associating with the P-TEFb complex and recruiting it to promoters. The protein is Bromodomain-containing protein 4A (brd4-a) of Xenopus laevis (African clawed frog).